A 630-amino-acid chain; its full sequence is Plastin-3 (630 aa).

2 EF-hand domains span residues D12–P47 and K52–S87. D25, N27, N29, E36, D65, N67, D69, K71, and E76 together coordinate Ca(2+). Actin-binding regions lie at residues T109–K382 and P383–M627. Calponin-homology (CH) domains lie at E123 to L239 and L267 to P378. A phosphoserine mark is found at S268, S293, S326, and S339. Phosphothreonine is present on T391. Calponin-homology (CH) domains lie at T397–T506 and K518–M627.

In terms of assembly, monomer. Expressed in a variety of organs, including muscle, brain, uterus and esophagus.

The protein localises to the cytoplasm. Actin-bundling protein. The polypeptide is Plastin-3 (PLS3) (Homo sapiens (Human)).